Consider the following 247-residue polypeptide: Putative trypsin-6 (247 aa).

A signal peptide spans 1–15 (MNPLLILAFVGAAVA). Residues 24–244 (IVGGYTCEEN…YVDWIKDTIA (221 aa)) enclose the Peptidase S1 domain. The cysteines at positions 48 and 64 are disulfide-linked. The Charge relay system role is filled by His63. Ca(2+)-binding residues include Glu75, Asn77, Val80, and Glu85. The active-site Charge relay system is the Asp107. 3 disulfide bridges follow: Cys139–Cys206, Cys171–Cys185, and Cys196–Cys220. The active-site Charge relay system is the Ser200.

It belongs to the peptidase S1 family. Tryptase subfamily. Overexpressed in metastasing in non small cell lung tumors, leading to an enhanced cell migration.

The protein localises to the secreted. It carries out the reaction Preferential cleavage: Arg-|-Xaa, Lys-|-Xaa.. Its function is as follows. May regulate cell migration. This is Putative trypsin-6 (PRSS3P2) from Homo sapiens (Human).